A 445-amino-acid chain; its full sequence is UPF0210 protein STK_02450 (445 aa).

This sequence belongs to the UPF0210 family.

The sequence is that of UPF0210 protein STK_02450 from Sulfurisphaera tokodaii (strain DSM 16993 / JCM 10545 / NBRC 100140 / 7) (Sulfolobus tokodaii).